A 250-amino-acid polypeptide reads, in one-letter code: MSRVAIVTGASSGNGLAIATRFLARGDRVAALDLSAETLEETARTHWHAYADKVLRVRADVADEGDVNAAIAATMEQFGAIDVLVNNAGITGNSEAGVLHTTPVEQFDKVMAVNVRGIFLGCRAVLPHMLLQGAGVIVNIASVASLVAFPGRSAYTTSKGAVLQLTKSVAVDYAGSGIRCNAVCPGMIETPMTQWRLDQPELRDQVLARIPQKEIGTAAQVADAVMFLAGEDATYVNGAALVMDGAYTAI.

Residues 12–14, D33, 60–61, and N87 each bind NAD(+); these read SGN and DV. R152 is a 2-oxopropyl-coenzyme M binding site. The active-site Proton acceptor is the Y155. Position 188 to 192 (188 to 192) interacts with NAD(+); the sequence is IETPM. Position 195–196 (195–196) interacts with 2-oxopropyl-coenzyme M; the sequence is WR.

The protein belongs to the short-chain dehydrogenases/reductases (SDR) family. In terms of assembly, homodimer in solution. Homotetramer. Component III of the aliphatic epoxide carboxylation complex together with components I, II and IV.

It catalyses the reaction (R)-2-hydroxypropyl-coenzyme M + NAD(+) = 2-oxopropyl-coenzyme M + NADH + H(+). It participates in alkene metabolism; propylene degradation. Its activity is regulated as follows. Inhibited by the arginine-specific modifiers 2,3-butanedione and phenylglyoxal. 2-(2-methyl-2-hydroxypropylthio)ethanesulfonate (M-HPC), an achiral analog of both R-HPC and S-HPC, and (2S)-2-hydroxypropyl-coenzyme M (S-HPC) are competitive inhibitors. Inhibited (at 70%) by the coenzyme M analog 2-bromoethanesulfonate (BES). In terms of biological role, involved in aliphatic epoxide carboxylation. Catalyzes the reversible oxidation of (R)-2-hydroxypropyl-coenzyme M (R-HPC) to 2-oxopropyl-coenzyme M (2-KPC). The enzyme is highly specific for the R enantiomers. In vitro can also use achiral 2-propanol and short-chain (R)- and (S)-2-alkanols. The protein is 2-(R)-hydroxypropyl-CoM dehydrogenase of Xanthobacter autotrophicus (strain ATCC BAA-1158 / Py2).